A 294-amino-acid polypeptide reads, in one-letter code: Protein CHLOROPLAST J-LIKE DOMAIN 1, chloroplastic (294 aa).

The transit peptide at Met1–Arg58 directs the protein to the chloroplast. Over Ala59–Asn164 the chain is Stromal. The tract at residues Asn74–Ile152 is J-like domain. A helical membrane pass occupies residues Asp165–Ile182. Over Lys183–Arg233 the chain is Chloroplast intermembrane. A helical transmembrane segment spans residues Leu234 to Leu256. Residues Asn257–Glu275 lie on the Stromal side of the membrane. Residues Leu276–Tyr293 traverse the membrane as a helical segment. Residue Arg294 is a topological domain, chloroplast intermembrane.

Interacts (via J-like domain) with ARC6 (via J domain).

Its subcellular location is the plastid. It is found in the chloroplast inner membrane. In terms of biological role, probably involved in the regulation of the fatty acid metabolic process in chloroplasts, especially chloroplastic galactolipids monogalactosyldiacylglycerol (MGDG) and digalactosyldiacylglycerol (DGDG). This chain is Protein CHLOROPLAST J-LIKE DOMAIN 1, chloroplastic, found in Arabidopsis thaliana (Mouse-ear cress).